A 412-amino-acid chain; its full sequence is Major facilitator superfamily domain-containing protein 3 (412 aa).

The next 12 helical transmembrane spans lie at 10–30, 40–60, 68–88, 99–119, 152–172, 173–193, 204–224, 252–272, 291–311, 320–340, 361–381, and 384–404; these read GLYL…PILL, VGLT…APLV, VWLT…AVLP, TTVM…DVAL, GGLL…LLAA, TYWL…LPWP, YLLQ…FVLT, LWSG…GGAL, LGSL…GASV, AVLL…TATF, FLAT…GVLA, and LGPH…VLDL.

This sequence belongs to the major facilitator superfamily. In brain, expressed in the cortex, striatum, hippocampus, hypothalamus, thalamus and cerebellum (at protein level). Widely expressed with highest levels in kidney and liver.

It is found in the membrane. The sequence is that of Major facilitator superfamily domain-containing protein 3 (Mfsd3) from Mus musculus (Mouse).